The following is a 762-amino-acid chain: 5-methyltetrahydropteroyltriglutamate--homocysteine methyltransferase (762 aa).

5-methyltetrahydropteroyltri-L-glutamate is bound by residues 17-20 (REWK) and K111. L-homocysteine is bound by residues 435–437 (IGS) and E488. Residues 435–437 (IGS) and E488 each bind L-methionine. Residues 519 to 520 (RC) and W565 contribute to the 5-methyltetrahydropteroyltri-L-glutamate site. L-homocysteine is bound at residue D603. Residue D603 participates in L-methionine binding. Residue E609 coordinates 5-methyltetrahydropteroyltri-L-glutamate. Residues H645, C647, and E669 each contribute to the Zn(2+) site. H698 acts as the Proton donor in catalysis. C730 provides a ligand contact to Zn(2+).

It belongs to the vitamin-B12 independent methionine synthase family. Requires Zn(2+) as cofactor.

The enzyme catalyses 5-methyltetrahydropteroyltri-L-glutamate + L-homocysteine = tetrahydropteroyltri-L-glutamate + L-methionine. It participates in amino-acid biosynthesis; L-methionine biosynthesis via de novo pathway; L-methionine from L-homocysteine (MetE route): step 1/1. Its function is as follows. Catalyzes the transfer of a methyl group from 5-methyltetrahydrofolate to homocysteine resulting in methionine formation. This Bacillus cereus (strain G9842) protein is 5-methyltetrahydropteroyltriglutamate--homocysteine methyltransferase.